The following is a 1693-amino-acid chain: Latrophilin Cirl (1693 aa).

Residues 1 to 753 lie on the Extracellular side of the membrane; it reads MLPTILSISY…LFTMFDGNMR (753 aa). The region spanning 25-114 is the SUEL-type lectin domain; sequence ACEGKKLTIE…KYLEAHYQCI (90 aa). The N-linked (GlcNAc...) asparagine glycan is linked to N142. Polar residues-rich tracts occupy residues 185-198 and 256-265; these read TAVTHSTPWSSTTA and NVTSPSNTRI. The tract at residues 185–299 is disordered; the sequence is TAVTHSTPWS…PGTAASGSVA (115 aa). The N-linked (GlcNAc...) asparagine glycan is linked to N256. Low complexity predominate over residues 275 to 299; the sequence is DDGTLLTTKSSPNRPPGTAASGSVA. Residues N301, N340, N397, N641, N689, and N716 are each glycosylated (N-linked (GlcNAc...) asparagine). The disordered stretch occupies residues 375–399; the sequence is YDEYDDDASSTTPAPSGGDCLHNSS. A GAIN-B domain is found at 564 to 740; the sequence is KKSKIYSSVV…AILMDVVDEH (177 aa). Intrachain disulfides connect C695–C722 and C710–C724. A GPS region spans residues 695 to 740; the sequence is CVFWNYIDHAWSANGCSLESTNRTHSVCSCNHLTNFAILMDVVDEH. A helical transmembrane segment spans residues 754-774; it reads IFIYISIGICVVFIVIALLTL. Residues 775–787 are Cytoplasmic-facing; sequence KLFNGVFVKSART. A helical transmembrane segment spans residues 788–808; that stretch reads SIYTSIYLCLLAIELLFLLGI. Residues 809 to 814 lie on the Extracellular side of the membrane; it reads EQTETS. The helical transmembrane segment at 815–835 threads the bilayer; the sequence is IFCGFITIFLHCAILSGTAWF. At 836–861 the chain is on the cytoplasmic side; it reads CYEAFHSYSTLTSDELLLEVDQTPKV. A helical transmembrane segment spans residues 862–882; it reads NCYYLLSYGLSLSVVAISLVI. At 883 to 906 the chain is on the extracellular side; that stretch reads DPSTYTQNDYCVLMEANALFYATF. The helical transmembrane segment at 907 to 927 threads the bilayer; the sequence is VVPVLVFFVAAIGYTFLSWII. Residues 928 to 954 are Cytoplasmic-facing; that stretch reads MCRKSRTGLKTKEHTRLASVRFDIRCS. The helical transmembrane segment at 955–975 threads the bilayer; the sequence is FVFLLLLSAVWCSAYFYLRGA. The Extracellular segment spans residues 976–985; it reads KMDDDTADVY. Residues 986 to 1006 traverse the membrane as a helical segment; it reads GYCFICFNTLLGLYIFVFHCI. Residues 1007 to 1693 are Cytoplasmic-facing; it reads QNEKIRREYR…VRCYLEPLAK (687 aa). At S1142 the chain carries Phosphoserine. 5 disordered regions span residues 1156–1194, 1220–1247, 1294–1319, 1433–1521, and 1601–1673; these read HKQQQQQQQQGPLGESYYHQPDYYSWKQPSTGTGGLKTP, KPNSGQHGKKKRGAGGVPASPSGSLHSR, QQQLRRQQLHQQQQQLSSDEEQAEQH, GGGS…SDER, and LAVN…QQRH. S1239 and S1246 each carry phosphoserine. Over residues 1294–1309 the composition is skewed to low complexity; it reads QQQLRRQQLHQQQQQL. S1310 and S1311 each carry phosphoserine. Positions 1439-1464 are enriched in low complexity; the sequence is GGSVSSRSQQQQLKKQQQQQSLAQQR. Acidic residues-rich tracts occupy residues 1472-1486 and 1496-1507; these read DDDDDEDEEEDEEAT and CDEDEEEDESDL. Residues 1508 to 1521 show a composition bias toward basic and acidic residues; that stretch reads EHDAHGLPPQSDER. Residues 1630-1655 show a composition bias toward low complexity; it reads LQKLSPQSTTSSSSHTSHSNPNLHPH. Over residues 1656–1672 the composition is skewed to basic residues; it reads QLTHPHPHQHPPHHQQR.

It belongs to the G-protein coupled receptor 2 family. LN-TM7 subfamily. Forms a heterodimer, consisting of a large extracellular region non-covalently linked to a seven-transmembrane moiety. In terms of processing, proteolytically cleaved into 2 subunits, an extracellular subunit and a seven-transmembrane subunit.

It is found in the cell membrane. The polypeptide is Latrophilin Cirl (Drosophila sechellia (Fruit fly)).